A 113-amino-acid polypeptide reads, in one-letter code: Pro-corazonin (113 aa).

A signal peptide spans Met1–Ala19. The residue at position 20 (Gln20) is a Pyrrolidone carboxylic acid. Asn30 carries the post-translational modification Asparagine amide. A disordered region spans residues Leu74–Val96. Residues Thr82–Val96 are compositionally biased toward polar residues.

It belongs to the corazonin family. As to expression, four pairs of lateral neurosecretory cells in the brains of late instar larvae, pupae and adults.

It localises to the secreted. Its function is as follows. Cardioactive peptide. Corazonin is probably involved in the physiological regulation of the heart beat. This chain is Pro-corazonin, found in Galleria mellonella (Greater wax moth).